The following is a 466-amino-acid chain: Histidine--tRNA ligase (466 aa).

This sequence belongs to the class-II aminoacyl-tRNA synthetase family. As to quaternary structure, homodimer.

It localises to the cytoplasm. The enzyme catalyses tRNA(His) + L-histidine + ATP = L-histidyl-tRNA(His) + AMP + diphosphate + H(+). This Xylella fastidiosa (strain M23) protein is Histidine--tRNA ligase.